Reading from the N-terminus, the 208-residue chain is Type 4 adapter protein LvgA (208 aa).

The segment at 184–208 (GYGYPPESPRENYKHPVSSATTARK) is disordered.

The T4BSS is a complex nanomachine composed of several subcomplexes. This subunit is part of the Type IV Coupling Complex (T4CC), a subcomplex composed of the DotLMNYZ core and the IcmSW-LvgA adapter subunits, linked by the C-terminal tail of DotL.

The protein resides in the cytoplasm. Its function is as follows. Component of the Dot/Icm type IVB secretion system (T4BSS), which is used to inject bacterial effector proteins into eukaryotic host cells. Part of a subcomplex which recruits effector proteins and delivers them to the core transmembrane subcomplex. Is a critical subunit for binding a subset of effector proteins. Recognizes more than one type of binding motif. May be a critical factor that confers host specificity. Necessary for full virulence of the bacterium in guinea pigs and presumably humans. In Legionella pneumophila, this protein is Type 4 adapter protein LvgA.